Consider the following 764-residue polypeptide: Chloride anion exchanger (764 aa).

Over 1–76 (MIEPFGNQYI…YRLKEWLLSD (76 aa)) the chain is Cytoplasmic. The chain crosses the membrane as a helical span at residues 77–97 (IVSGISTGIVAVLQGLAFALL). The Extracellular portion of the chain corresponds to 98-99 (VD). A helical membrane pass occupies residues 100–120 (IPPVYGLYASFFPAIIYLFFG). Topologically, residues 121–124 (TSRH) are cytoplasmic. Residues 125 to 145 (ISVGPFPILSMMVGLAVSGAV) form a helical membrane-spanning segment. Topologically, residues 146–175 (SKAVPDRNATTLGLPNNSNNSSLLDDERVR) are extracellular. N153, N161, and N165 each carry an N-linked (GlcNAc...) asparagine glycan. Residues 176–196 (VAAAASVTVLSGIIQLAFGIL) form a helical membrane-spanning segment. A topological domain (cytoplasmic) is located at residue R197. A helical transmembrane segment spans residues 198-218 (IGFVVIYLSESLISGFTTAAA). At 219–257 (VHVLVSQLKFIFQLTVPSHTDPVSIFKVLYSVFSQIEKT) the chain is on the extracellular side. The helical transmembrane segment at 258 to 278 (NIADLVTALIVLLVVSIVKEI) threads the bilayer. The Cytoplasmic portion of the chain corresponds to 279-342 (NQRFKDKLPV…VETFQNTVGD (64 aa)). A helical membrane pass occupies residues 343–363 (CFGIAMVAFAVAFSVASVYSL). Over 364 to 374 (KYDYPLDGNQE) the chain is Extracellular. A helical transmembrane segment spans residues 375-395 (LIALGLGNIVCGVFRGFAGST). The Cytoplasmic segment spans residues 396 to 411 (ALSRSAVQESTGGKTQ). A helical membrane pass occupies residues 412–432 (IAGLIGAIIVLIVVLAIGFLL). At 433–469 (APLQKSVLAALALGNLKGMLMQFAEIGRLWRKDKYDC) the chain is on the extracellular side. A helical transmembrane segment spans residues 470 to 490 (LIWIMTFIFTIVLGLGLGLAA). At 491–701 (SVAFQLLTIV…EKLNRYEFFD (211 aa)) the chain is on the cytoplasmic side. The STAS domain maps to 525–720 (DYYDMYEPEG…LTIHDAVLHI (196 aa)). Residues 761–764 (ETKF) carry the PDZ-binding motif.

The protein belongs to the SLC26A/SulP transporter (TC 2.A.53) family. In terms of assembly, interacts with CFTR, SLC26A6 and NHERF1. Interacts with PDZK1. Interacts (via PDZ-binding motif) with NHERF4 (via the third PDZ domain); interaction leads to decreased expression of SLC26A3 on the cell membrane resulting in its reduced exchanger activity. In terms of processing, N-glycosylation is required for efficient cell surface expression, and protection from proteolytic degradation. In terms of tissue distribution, expressed in the colon. Expression is significantly decreased in adenomas (polyps) and adenocarcinomas of the colon.

The protein resides in the apical cell membrane. Its subcellular location is the membrane. The protein localises to the cell membrane. It carries out the reaction hydrogencarbonate(in) + 2 chloride(out) = hydrogencarbonate(out) + 2 chloride(in). Its activity is regulated as follows. Inhibited by acidic pH. Mediates chloride-bicarbonate exchange with a chloride bicarbonate stoichiometry of 2:1 in the intestinal epithelia. Plays a role in the chloride and bicarbonate homeostasis during sperm epididymal maturation and capacitation. The sequence is that of Chloride anion exchanger (SLC26A3) from Homo sapiens (Human).